Here is a 305-residue protein sequence, read N- to C-terminus: Probable lipid kinase YegS-like (305 aa).

The 129-residue stretch at 1–129 (MTQRRAMLIL…VDLGEVGGKL (129 aa)) folds into the DAGKc domain. ATP is bound by residues Thr-39, 65-71 (GDGTLRD), and Thr-92. 3 residues coordinate Mg(2+): Leu-210, Asp-213, and Leu-215. The active-site Proton acceptor is Glu-268.

This sequence belongs to the diacylglycerol/lipid kinase family. YegS lipid kinase subfamily. Mg(2+) serves as cofactor. Ca(2+) is required as a cofactor.

The protein resides in the cytoplasm. Probably phosphorylates lipids; the in vivo substrate is unknown. In Pseudomonas savastanoi pv. phaseolicola (strain 1448A / Race 6) (Pseudomonas syringae pv. phaseolicola (strain 1448A / Race 6)), this protein is Probable lipid kinase YegS-like.